A 556-amino-acid chain; its full sequence is MKSDIEIAQSVALQPITDIVKKVGIDGDDIELYGKYKAKLSFEKMKAVEANEPGKLILVTAINPTPAGEGKSTMSIGLADALNQMGKKTMLALREPSLGPVMGIKGGAAGGGYAQVLPMEDINLHFTGDMHAITTANNALSALIDNHLQQGNDLGIDPRRIIWKRVLDLNDRALRQVIVGLGSPVNGVPREDGFDITVASEIMAILCLATDLKDLKKRLADIVVAYTYDRKPVYVRDLKVEGALTLILKDAIKPNLVQTIYGTPALIHGGPFANIAHGCNSVLATSTALRLADYTVTEAGFGADLGAEKFLNIKVPNLPKAPDAIVIVATLRALKMHGGVAKSDLAAENCEAVRLGFANLKRHVENMRQFKVPVVVAINEFVADTEAEIATLKALCEEIKVPVELASVWANGAEGGLALAKTVVRVIDQEAADYKRLYSDEDTLEEKVINIVTQIYGGKAVQFGPKAKTQLKQFAEFGWDKLPVCMAKTQYSFSDNPSLLGAPTDFDITIREFVPKTGAGFIVGLTGDVMTMPGLPKVPAAMAMDVAENGTALGLF.

Residue 65–72 (TPAGEGKS) participates in ATP binding.

This sequence belongs to the formate--tetrahydrofolate ligase family.

It catalyses the reaction (6S)-5,6,7,8-tetrahydrofolate + formate + ATP = (6R)-10-formyltetrahydrofolate + ADP + phosphate. The protein operates within one-carbon metabolism; tetrahydrofolate interconversion. The protein is Formate--tetrahydrofolate ligase 1 of Streptococcus pyogenes serotype M1.